The chain runs to 268 residues: tRNA pseudouridine synthase A (268 aa).

The active-site Nucleophile is aspartate 52. Tyrosine 113 provides a ligand contact to substrate.

This sequence belongs to the tRNA pseudouridine synthase TruA family. Homodimer.

The catalysed reaction is uridine(38/39/40) in tRNA = pseudouridine(38/39/40) in tRNA. Formation of pseudouridine at positions 38, 39 and 40 in the anticodon stem and loop of transfer RNAs. This Rhizobium leguminosarum bv. trifolii (strain WSM2304) protein is tRNA pseudouridine synthase A.